The sequence spans 374 residues: MRNPKLKNLLAPTLLSLAMFAGATQAAAPLRPPQGYFAPVDKFKTGDKSDGCDAMPAPYTGPLQFRSKYEGSDKARATLNVQSEKAFRDTTKDITTLERGTAKRVMQFMRDGRPEQLECTLNWLTAWAKADALMSKDFNHTGKSMRKWALGSMASSYIRLKFSDSHPLAQHQQEAQLIEAWFSKMADQVVSDWDNLPLEKTNNHSYWAAWSVMATAVATNRRDLFDWAVKEYKVGVNQVDADGFLPNELKRQQRALAYHNYALPPLAMIASFAQINGVDLRQENNGALKRLGDRVLAGVKDPDEFEEKNGKKQDMTDLKEDMKFAWLEPFCTLYTCAPDVIEKKRDMQPFKTFRLGGDLTKVYDPSHEKGNKGS.

The signal sequence occupies residues 1-26 (MRNPKLKNLLAPTLLSLAMFAGATQA). Substrate contacts are provided by residues 67–68 (SK), 140–141 (HT), and Y258.

This sequence belongs to the polysaccharide lyase 5 family.

It is found in the periplasm. It catalyses the reaction Eliminative cleavage of alginate to give oligosaccharides with 4-deoxy-alpha-L-erythro-hex-4-enuronosyl groups at their non-reducing ends and beta-D-mannuronate at their reducing end.. In terms of biological role, catalyzes the depolymerization of alginate by cleaving the beta-1,4 glycosidic bond between two adjacent sugar residues via a beta-elimination mechanism. May serve to degrade mislocalized alginate that is trapped in the periplasmic space. The sequence is that of Alginate lyase from Cobetia marina (Deleya marina).